The sequence spans 163 residues: Shikimate kinase (163 aa).

10 to 15 (GVGKSS) is an ATP binding site. Ser-14 provides a ligand contact to Mg(2+). Positions 28, 52, and 75 each coordinate substrate. Arg-116 is an ATP binding site. Arg-134 is a binding site for substrate. ATP is bound at residue Arg-151.

This sequence belongs to the shikimate kinase family. In terms of assembly, monomer. Mg(2+) serves as cofactor.

It localises to the cytoplasm. The enzyme catalyses shikimate + ATP = 3-phosphoshikimate + ADP + H(+). The protein operates within metabolic intermediate biosynthesis; chorismate biosynthesis; chorismate from D-erythrose 4-phosphate and phosphoenolpyruvate: step 5/7. Its function is as follows. Catalyzes the specific phosphorylation of the 3-hydroxyl group of shikimic acid using ATP as a cosubstrate. In Streptococcus thermophilus (strain ATCC BAA-491 / LMD-9), this protein is Shikimate kinase.